We begin with the raw amino-acid sequence, 136 residues long: Ribosome-binding factor A (136 aa).

The protein belongs to the RbfA family. Monomer. Binds 30S ribosomal subunits, but not 50S ribosomal subunits or 70S ribosomes.

The protein localises to the cytoplasm. One of several proteins that assist in the late maturation steps of the functional core of the 30S ribosomal subunit. Associates with free 30S ribosomal subunits (but not with 30S subunits that are part of 70S ribosomes or polysomes). Required for efficient processing of 16S rRNA. May interact with the 5'-terminal helix region of 16S rRNA. The polypeptide is Ribosome-binding factor A (Serratia proteamaculans (strain 568)).